The chain runs to 243 residues: UPF0246 protein SEQ_2141 (243 aa).

It belongs to the UPF0246 family.

This is UPF0246 protein SEQ_2141 from Streptococcus equi subsp. equi (strain 4047).